The following is a 232-amino-acid chain: Phosphoribosylformylglycinamidine synthase subunit PurQ (232 aa).

A Glutamine amidotransferase type-1 domain is found at 2–232; sequence KIAIIQFGGT…SMADYITENF (231 aa). Cys86 functions as the Nucleophile in the catalytic mechanism. Catalysis depends on residues His203 and Glu205.

Part of the FGAM synthase complex composed of 1 PurL, 1 PurQ and 2 PurS subunits.

It is found in the cytoplasm. The catalysed reaction is N(2)-formyl-N(1)-(5-phospho-beta-D-ribosyl)glycinamide + L-glutamine + ATP + H2O = 2-formamido-N(1)-(5-O-phospho-beta-D-ribosyl)acetamidine + L-glutamate + ADP + phosphate + H(+). The enzyme catalyses L-glutamine + H2O = L-glutamate + NH4(+). It functions in the pathway purine metabolism; IMP biosynthesis via de novo pathway; 5-amino-1-(5-phospho-D-ribosyl)imidazole from N(2)-formyl-N(1)-(5-phospho-D-ribosyl)glycinamide: step 1/2. Part of the phosphoribosylformylglycinamidine synthase complex involved in the purines biosynthetic pathway. Catalyzes the ATP-dependent conversion of formylglycinamide ribonucleotide (FGAR) and glutamine to yield formylglycinamidine ribonucleotide (FGAM) and glutamate. The FGAM synthase complex is composed of three subunits. PurQ produces an ammonia molecule by converting glutamine to glutamate. PurL transfers the ammonia molecule to FGAR to form FGAM in an ATP-dependent manner. PurS interacts with PurQ and PurL and is thought to assist in the transfer of the ammonia molecule from PurQ to PurL. This chain is Phosphoribosylformylglycinamidine synthase subunit PurQ, found in Methanosarcina acetivorans (strain ATCC 35395 / DSM 2834 / JCM 12185 / C2A).